The sequence spans 376 residues: tRNA-specific 2-thiouridylase MnmA (376 aa).

ATP is bound by residues 10-17 (GMSGGVDS) and Met-36. The segment at 96-98 (NPD) is interaction with target base in tRNA. The active-site Nucleophile is Cys-101. Cys-101 and Cys-198 form a disulfide bridge. Gly-125 serves as a coordination point for ATP. The segment at 148–150 (KDQ) is interaction with tRNA. The active-site Cysteine persulfide intermediate is Cys-198. The interval 305-306 (RY) is interaction with tRNA.

It belongs to the MnmA/TRMU family.

The protein resides in the cytoplasm. The catalysed reaction is S-sulfanyl-L-cysteinyl-[protein] + uridine(34) in tRNA + AH2 + ATP = 2-thiouridine(34) in tRNA + L-cysteinyl-[protein] + A + AMP + diphosphate + H(+). Functionally, catalyzes the 2-thiolation of uridine at the wobble position (U34) of tRNA, leading to the formation of s(2)U34. The sequence is that of tRNA-specific 2-thiouridylase MnmA from Protochlamydia amoebophila (strain UWE25).